We begin with the raw amino-acid sequence, 416 residues long: S-adenosylmethionine synthase (416 aa).

His-14 provides a ligand contact to ATP. Residue Asp-16 participates in Mg(2+) binding. Glu-42 serves as a coordination point for K(+). Residues Glu-55 and Gln-98 each contribute to the L-methionine site. Residues 98–108 (QSADINQGVDR) form a flexible loop region. ATP-binding positions include 164–166 (DAK), 240–241 (KF), Asp-249, 255–256 (RK), Ala-272, and Lys-276. Residue Asp-249 coordinates L-methionine. Lys-280 contributes to the L-methionine binding site.

The protein belongs to the AdoMet synthase family. In terms of assembly, homotetramer; dimer of dimers. Mg(2+) serves as cofactor. It depends on K(+) as a cofactor.

It is found in the cytoplasm. It carries out the reaction L-methionine + ATP + H2O = S-adenosyl-L-methionine + phosphate + diphosphate. It participates in amino-acid biosynthesis; S-adenosyl-L-methionine biosynthesis; S-adenosyl-L-methionine from L-methionine: step 1/1. Catalyzes the formation of S-adenosylmethionine (AdoMet) from methionine and ATP. The overall synthetic reaction is composed of two sequential steps, AdoMet formation and the subsequent tripolyphosphate hydrolysis which occurs prior to release of AdoMet from the enzyme. In Flavobacterium johnsoniae (strain ATCC 17061 / DSM 2064 / JCM 8514 / BCRC 14874 / CCUG 350202 / NBRC 14942 / NCIMB 11054 / UW101) (Cytophaga johnsonae), this protein is S-adenosylmethionine synthase.